We begin with the raw amino-acid sequence, 52 residues long: Photosystem II reaction center protein M (52 aa).

The chain crosses the membrane as a helical span at residues 6 to 26 (FGFAASLLFVGVPTIFLIGLF). The tract at residues 31–52 (DGEKSSFYSDTSKGRLSPEPKK) is disordered. The segment covering 42 to 52 (SKGRLSPEPKK) has biased composition (basic and acidic residues).

This sequence belongs to the PsbM family. PSII is composed of 1 copy each of membrane proteins PsbA, PsbB, PsbC, PsbD, PsbE, PsbF, PsbH, PsbI, PsbJ, PsbK, PsbL, PsbM, PsbT, PsbX, PsbY, Psb30/Ycf12, peripheral proteins PsbO, CyanoQ (PsbQ), PsbU, PsbV and a large number of cofactors. It forms dimeric complexes.

It localises to the cellular thylakoid membrane. Functionally, one of the components of the core complex of photosystem II (PSII). PSII is a light-driven water:plastoquinone oxidoreductase that uses light energy to abstract electrons from H(2)O, generating O(2) and a proton gradient subsequently used for ATP formation. It consists of a core antenna complex that captures photons, and an electron transfer chain that converts photonic excitation into a charge separation. This subunit is found at the monomer-monomer interface. In Prochlorococcus marinus (strain NATL1A), this protein is Photosystem II reaction center protein M.